We begin with the raw amino-acid sequence, 244 residues long: Carboxy-S-adenosyl-L-methionine synthase (244 aa).

S-adenosyl-L-methionine is bound by residues Tyr-40, 65–67 (GCS), 90–91 (DN), 119–120 (DL), Asn-134, and Arg-201.

This sequence belongs to the class I-like SAM-binding methyltransferase superfamily. Cx-SAM synthase family. Homodimer.

The enzyme catalyses prephenate + S-adenosyl-L-methionine = carboxy-S-adenosyl-L-methionine + 3-phenylpyruvate + H2O. Catalyzes the conversion of S-adenosyl-L-methionine (SAM) to carboxy-S-adenosyl-L-methionine (Cx-SAM). The polypeptide is Carboxy-S-adenosyl-L-methionine synthase (Geobacter metallireducens (strain ATCC 53774 / DSM 7210 / GS-15)).